The following is an 887-amino-acid chain: MSRIIVKGLPVYLTDDNLREHFTKRLRQKHSHQAVNGSGPDLITDVKILRDRNGESRRFGFIGYRNEEDAFDAVEYFNGSFINTSKIEVSMAKSFADPRVPQPMKEKRREALKRFREKEEKLLQEENRKKKKVDENKHSNIDDEIRKNKQLQEFMETMKPSSQVTSWEKVGIDKSIEDEKLKREEEDSSVQGNSLLAHALALKEENNKDEAPNLVIENESDDEYSALNRNRDEDQEDAGEEEKMISISNLKDTDIGLVNDDANSDEKENEKRRNLAQDEKVSDLDWFKQRRVRIKESEAETREKSSSYATEQNESLDTKKEEQPERAVPQKTDEELAIEKINQTGRLFLRNILYTSKEEDFRKLFSPFGELEEVHVALDTRTGQSKGFAYVLFKDSKNAVNAYVELDKQIFQGRLLHILPGEEKKSHRLDEFDLKNMPLKKQKELKRKAAASRQTFSWNSLYMNQDAVLGSVAAKLGLEKSQLIDAENSSSAVKQALAEAHVIGDVRKYFESKGVDLTKFSQLKSTNQRDDKVILVKNFPFGTTREELGEMFLPYGKLERLLMPPAGTIAIVQFRDTTSARAAFTKLSYKRFKDGIIYLERGPKDCFTKPAEADDLINNTSAKEEENPVEVKPSSNDLMEANKDVTEGSSNAHDEDVIDGPTVSIFIKNLNFSTTNQNLTDRFKVFTGFVVAQVKTKPDPKHQGKTLSMGFGFVEFRTKEQANAVIAAMDGTVIDGHKIQLKLSHRQASQSGNTKTKSNKKSGKIIVKNLPFEATRKDVFELFNSFGQLKSVRVPKKFDKSARGFAFVEFLLPKEAENAMDQLHGVHLLGRRLVMQYAEEDAVDAEEEIARMTKKVRKQVATNEMAALRNGGGRKKLDVDDEENEGF.

An RRM 1 domain is found at 2-94 (SRIIVKGLPV…SKIEVSMAKS (93 aa)). Disordered regions lie at residues 121-143 (KLLQEENRKKKKVDENKHSNIDD), 203-276 (KEEN…RNLA), and 297-336 (SEAETREKSSSYATEQNESLDTKKEEQPERAVPQKTDEEL). Residues serine 220 and serine 264 each carry the phosphoserine modification. Over residues 264-276 (SDEKENEKRRNLA) the composition is skewed to basic and acidic residues. The span at 306 to 315 (SSYATEQNES) shows a compositional bias: polar residues. The span at 316 to 325 (LDTKKEEQPE) shows a compositional bias: basic and acidic residues. 4 RRM domains span residues 345–423 (GRLF…PGEE), 532–604 (KVIL…RGPK), 663–746 (VSIF…LSHR), and 763–840 (GKII…YAEE). A disordered region spans residues 864–887 (EMAALRNGGGRKKLDVDDEENEGF).

This sequence belongs to the RRM MRD1 family. Interacts with NOP1. Binds to the 35S pre-rRNA and the U3 snoRNA.

It localises to the nucleus. Functionally, involved in pre-rRNA processing. Required for maintaining steady-state levels of 40S ribosomal subunit. Required for the initial processing of pre-rRNA at the A0 to A2 sites, leading to the processing of the 23S pre-rRNA intermediate to the 18S rRNA. This chain is Multiple RNA-binding domain-containing protein 1 (MRD1), found in Saccharomyces cerevisiae (strain ATCC 204508 / S288c) (Baker's yeast).